A 113-amino-acid polypeptide reads, in one-letter code: Large ribosomal subunit protein uL22 (113 aa).

The protein belongs to the universal ribosomal protein uL22 family. Part of the 50S ribosomal subunit.

Its function is as follows. This protein binds specifically to 23S rRNA; its binding is stimulated by other ribosomal proteins, e.g. L4, L17, and L20. It is important during the early stages of 50S assembly. It makes multiple contacts with different domains of the 23S rRNA in the assembled 50S subunit and ribosome. In terms of biological role, the globular domain of the protein is located near the polypeptide exit tunnel on the outside of the subunit, while an extended beta-hairpin is found that lines the wall of the exit tunnel in the center of the 70S ribosome. The sequence is that of Large ribosomal subunit protein uL22 from Neorickettsia sennetsu (strain ATCC VR-367 / Miyayama) (Ehrlichia sennetsu).